The chain runs to 243 residues: Small ribosomal subunit protein uS3 (243 aa).

A KH type-2 domain is found at 39–110 (IRTFIQKKYG…QVRINVVEVE (72 aa)). A disordered region spans residues 216 to 243 (QTIPVGASPKRKASRRPQQFEDRSNENS). Positions 233-243 (QQFEDRSNENS) are enriched in basic and acidic residues.

This sequence belongs to the universal ribosomal protein uS3 family. As to quaternary structure, part of the 30S ribosomal subunit. Forms a tight complex with proteins S10 and S14.

Binds the lower part of the 30S subunit head. Binds mRNA in the 70S ribosome, positioning it for translation. This is Small ribosomal subunit protein uS3 from Prochlorococcus marinus (strain AS9601).